The primary structure comprises 89 residues: Cytochrome c6 (89 aa).

Residues Cys15, Cys18, His19, and Met61 each contribute to the heme c site.

This sequence belongs to the cytochrome c family. PetJ subfamily. In terms of assembly, monomer. Binds 1 heme c group covalently per subunit.

It localises to the plastid. The protein resides in the chloroplast thylakoid lumen. Functionally, functions as an electron carrier between membrane-bound cytochrome b6-f and photosystem I in oxygenic photosynthesis. The sequence is that of Cytochrome c6 (petJ) from Chlorolobion braunii (Green alga).